A 242-amino-acid chain; its full sequence is 1-(5-phosphoribosyl)-5-[(5-phosphoribosylamino)methylideneamino] imidazole-4-carboxamide isomerase (242 aa).

The Proton acceptor role is filled by Asp8. Catalysis depends on Asp129, which acts as the Proton donor.

Belongs to the HisA/HisF family.

The protein localises to the cytoplasm. The enzyme catalyses 1-(5-phospho-beta-D-ribosyl)-5-[(5-phospho-beta-D-ribosylamino)methylideneamino]imidazole-4-carboxamide = 5-[(5-phospho-1-deoxy-D-ribulos-1-ylimino)methylamino]-1-(5-phospho-beta-D-ribosyl)imidazole-4-carboxamide. Its pathway is amino-acid biosynthesis; L-histidine biosynthesis; L-histidine from 5-phospho-alpha-D-ribose 1-diphosphate: step 4/9. This is 1-(5-phosphoribosyl)-5-[(5-phosphoribosylamino)methylideneamino] imidazole-4-carboxamide isomerase from Maridesulfovibrio salexigens (strain ATCC 14822 / DSM 2638 / NCIMB 8403 / VKM B-1763) (Desulfovibrio salexigens).